The sequence spans 190 residues: Threonylcarbamoyl-AMP synthase (190 aa).

Residues 7 to 190 (GDAIAAAIDV…ALTGELFRQG (184 aa)) enclose the YrdC-like domain.

This sequence belongs to the SUA5 family. TsaC subfamily.

It is found in the cytoplasm. It catalyses the reaction L-threonine + hydrogencarbonate + ATP = L-threonylcarbamoyladenylate + diphosphate + H2O. Functionally, required for the formation of a threonylcarbamoyl group on adenosine at position 37 (t(6)A37) in tRNAs that read codons beginning with adenine. Catalyzes the conversion of L-threonine, HCO(3)(-)/CO(2) and ATP to give threonylcarbamoyl-AMP (TC-AMP) as the acyladenylate intermediate, with the release of diphosphate. This chain is Threonylcarbamoyl-AMP synthase, found in Escherichia coli O1:K1 / APEC.